Reading from the N-terminus, the 82-residue chain is Immediate early response 3-interacting protein 1 (82 aa).

Transmembrane regions (helical) follow at residues 2–22 and 62–82; these read AFTLYALIQTAILFTNAIAVL and VMRVPLIAVNSVCIVLLLLFG.

The protein belongs to the YOS1 family.

The protein localises to the endoplasmic reticulum membrane. Its function is as follows. Regulator of endoplasmic reticulum secretion that acts as a key determinant of brain size. Required for secretion of extracellular matrix proteins. Required for correct brain development by depositing sufficient extracellular matrix proteins for tissue integrity and the proliferation of neural progenitors. Acts as a regulator of the unfolded protein response (UPR). This chain is Immediate early response 3-interacting protein 1, found in Danio rerio (Zebrafish).